A 443-amino-acid chain; its full sequence is Thymidine phosphorylase (443 aa).

Belongs to the thymidine/pyrimidine-nucleoside phosphorylase family. As to quaternary structure, homodimer.

The catalysed reaction is thymidine + phosphate = 2-deoxy-alpha-D-ribose 1-phosphate + thymine. It participates in pyrimidine metabolism; dTMP biosynthesis via salvage pathway; dTMP from thymine: step 1/2. In terms of biological role, the enzymes which catalyze the reversible phosphorolysis of pyrimidine nucleosides are involved in the degradation of these compounds and in their utilization as carbon and energy sources, or in the rescue of pyrimidine bases for nucleotide synthesis. The protein is Thymidine phosphorylase of Shewanella loihica (strain ATCC BAA-1088 / PV-4).